A 1374-amino-acid chain; its full sequence is DNA-directed RNA polymerase subunit beta (1374 aa).

This sequence belongs to the RNA polymerase beta chain family. As to quaternary structure, the RNAP catalytic core consists of 2 alpha, 1 beta, 1 beta' and 1 omega subunit. When a sigma factor is associated with the core the holoenzyme is formed, which can initiate transcription.

It carries out the reaction RNA(n) + a ribonucleoside 5'-triphosphate = RNA(n+1) + diphosphate. DNA-dependent RNA polymerase catalyzes the transcription of DNA into RNA using the four ribonucleoside triphosphates as substrates. The polypeptide is DNA-directed RNA polymerase subunit beta (Paracidovorax citrulli (strain AAC00-1) (Acidovorax citrulli)).